The sequence spans 370 residues: 3-dehydroquinate synthase (370 aa).

NAD(+) is bound by residues 108–112 (GVIGD), 132–133 (TT), Lys-145, and Lys-154. Zn(2+) is bound by residues Glu-187, His-249, and His-267.

Belongs to the sugar phosphate cyclases superfamily. Dehydroquinate synthase family. It depends on Co(2+) as a cofactor. Zn(2+) is required as a cofactor. Requires NAD(+) as cofactor.

Its subcellular location is the cytoplasm. It carries out the reaction 7-phospho-2-dehydro-3-deoxy-D-arabino-heptonate = 3-dehydroquinate + phosphate. Its pathway is metabolic intermediate biosynthesis; chorismate biosynthesis; chorismate from D-erythrose 4-phosphate and phosphoenolpyruvate: step 2/7. Catalyzes the conversion of 3-deoxy-D-arabino-heptulosonate 7-phosphate (DAHP) to dehydroquinate (DHQ). This is 3-dehydroquinate synthase from Cereibacter sphaeroides (strain KD131 / KCTC 12085) (Rhodobacter sphaeroides).